The sequence spans 318 residues: Aspartate carbamoyltransferase catalytic subunit (318 aa).

R59 and T60 together coordinate carbamoyl phosphate. Residue K87 coordinates L-aspartate. 3 residues coordinate carbamoyl phosphate: R109, H137, and Q140. Residues R170 and R224 each coordinate L-aspartate. G265 and P266 together coordinate carbamoyl phosphate.

This sequence belongs to the aspartate/ornithine carbamoyltransferase superfamily. ATCase family. In terms of assembly, heterododecamer (2C3:3R2) of six catalytic PyrB chains organized as two trimers (C3), and six regulatory PyrI chains organized as three dimers (R2).

It catalyses the reaction carbamoyl phosphate + L-aspartate = N-carbamoyl-L-aspartate + phosphate + H(+). Its pathway is pyrimidine metabolism; UMP biosynthesis via de novo pathway; (S)-dihydroorotate from bicarbonate: step 2/3. In terms of biological role, catalyzes the condensation of carbamoyl phosphate and aspartate to form carbamoyl aspartate and inorganic phosphate, the committed step in the de novo pyrimidine nucleotide biosynthesis pathway. The sequence is that of Aspartate carbamoyltransferase catalytic subunit from Rhizobium johnstonii (strain DSM 114642 / LMG 32736 / 3841) (Rhizobium leguminosarum bv. viciae).